Consider the following 172-residue polypeptide: Adenine phosphoribosyltransferase (172 aa).

This sequence belongs to the purine/pyrimidine phosphoribosyltransferase family. Homodimer.

It localises to the cytoplasm. The enzyme catalyses AMP + diphosphate = 5-phospho-alpha-D-ribose 1-diphosphate + adenine. The protein operates within purine metabolism; AMP biosynthesis via salvage pathway; AMP from adenine: step 1/1. Its function is as follows. Catalyzes a salvage reaction resulting in the formation of AMP, that is energically less costly than de novo synthesis. The chain is Adenine phosphoribosyltransferase from Prochlorococcus marinus (strain MIT 9303).